The chain runs to 206 residues: Protein GrpE (206 aa).

The protein belongs to the GrpE family. As to quaternary structure, homodimer.

The protein localises to the cytoplasm. In terms of biological role, participates actively in the response to hyperosmotic and heat shock by preventing the aggregation of stress-denatured proteins, in association with DnaK and GrpE. It is the nucleotide exchange factor for DnaK and may function as a thermosensor. Unfolded proteins bind initially to DnaJ; upon interaction with the DnaJ-bound protein, DnaK hydrolyzes its bound ATP, resulting in the formation of a stable complex. GrpE releases ADP from DnaK; ATP binding to DnaK triggers the release of the substrate protein, thus completing the reaction cycle. Several rounds of ATP-dependent interactions between DnaJ, DnaK and GrpE are required for fully efficient folding. This Shewanella baltica (strain OS223) protein is Protein GrpE.